Here is a 436-residue protein sequence, read N- to C-terminus: Protein FAM83A (436 aa).

Residues 1-298 (MSRSRHVGKI…LYASSKPLMG (298 aa)) are DUF1669. Residues 73 to 95 (AQAKEPPDAPDSAGGAESGPRGL) form a disordered region. 4 positions are modified to phosphoserine: Ser301, Ser329, Ser350, and Ser359. The tract at residues 302 to 371 (PRLVAPFQPN…APIPPTVPRL (70 aa)) is disordered. Residues 321–349 (LSGTSDSASDRTSSNPFSSLSTGSNAHNQ) are compositionally biased toward polar residues. Positions 350 to 359 (SLSTSSGPSS) are enriched in low complexity.

It belongs to the FAM83 family. In terms of assembly, directly interacts (via DUF1669) with casein kinase isoforms CSNK1A1, CSNK1A1L, CSNK1D and CSNK1E. Post-translationally, may be phosphorylated upon EGFR activation. As to expression, widely expressed, with relatively higher expression levels in adipose tissues, especially in epididymal and inguinal white adipose tissue (at protein level).

It localises to the cytoplasm. Its subcellular location is the mitochondrion. Involved in mitochondrial maintenance during adipogenesis. May be acting by playing a role in the maintenance of normal mitochondrial function. The polypeptide is Protein FAM83A (Mus musculus (Mouse)).